The sequence spans 636 residues: Sodium-dependent multivitamin transporter (636 aa).

12 helical membrane-spanning segments follow: residues 24–44, 68–88, 101–121, 143–163, 176–196, 199–219, 256–276, 297–317, 336–356, 404–424, 428–448, and 456–476; these read FSLV…AIGL, CLPV…ILGV, FLGC…IPVF, ICGT…VLYA, LWLS…LGGL, VIWT…AVII, FWTL…VNQA, VFPC…VMFA, FVLY…GLFV, FGYG…GPVL, ISIF…GMFF, and AIVG…GSIV. Residues Asn-489 and Asn-498 are each glycosylated (N-linked (GlcNAc...) asparagine). A helical membrane pass occupies residues 528–548; it reads LWYSAHNSTTVIVVGLIVSLL. Positions 606-627 are disordered; that stretch reads LRASGDKEPMTEASPVHQGTSP.

The protein belongs to the sodium:solute symporter (SSF) (TC 2.A.21) family. In terms of assembly, interacts with PDZD11.

It is found in the cell membrane. The protein resides in the apical cell membrane. It carries out the reaction biotin(out) + 2 Na(+)(out) = biotin(in) + 2 Na(+)(in). The enzyme catalyses (R)-pantothenate(out) + 2 Na(+)(out) = (R)-pantothenate(in) + 2 Na(+)(in). The catalysed reaction is (R)-lipoate(out) + 2 Na(+)(out) = (R)-lipoate(in) + 2 Na(+)(in). It catalyses the reaction iodide(out) + 2 Na(+)(out) = iodide(in) + 2 Na(+)(in). Its function is as follows. Sodium-dependent multivitamin transporter that mediates the electrogenic transport of pantothenate, biotin, lipoate and iodide. Functions as a Na(+)-coupled substrate symporter where the stoichiometry of Na(+):substrate is 2:1, creating an electrochemical Na(+) gradient used as driving force for substrate uptake. Required for biotin and pantothenate uptake in the intestine across the brush border membrane. Plays a role in the maintenance of intestinal mucosa integrity, by providing the gut mucosa with biotin. Contributes to the luminal uptake of biotin and pantothenate into the brain across the blood-brain barrier. The polypeptide is Sodium-dependent multivitamin transporter (SLC5A6) (Oryctolagus cuniculus (Rabbit)).